Here is a 79-residue protein sequence, read N- to C-terminus: Conotoxin Kt6.1 (79 aa).

The first 22 residues, 1 to 22 (MKLTCVLIISVLFLTASQLITA), serve as a signal peptide directing secretion. Residues 23-47 (VYSRDKQQYRAARLRDEMRNLKGAR) constitute a propeptide that is removed on maturation. 3 disulfide bridges follow: cysteine 49/cysteine 62, cysteine 56/cysteine 67, and cysteine 61/cysteine 77. 2 positions are modified to 4-hydroxyproline: proline 60 and proline 63.

The protein belongs to the conotoxin O1 superfamily. Expressed by the venom duct.

It localises to the secreted. Ion channel inhibitor that inhibits the increase in intracellular calcium upon depolarization in DRG neurons. In vivo, both intraperitoneal and intracranial injections into mice induce hyperactivity. This chain is Conotoxin Kt6.1, found in Conus kintoki (Cone snail).